Here is a 298-residue protein sequence, read N- to C-terminus: Probable GTP 3',8-cyclase (298 aa).

One can recognise a Radical SAM core domain in the interval 4-221 (RYGREIRSFR…VFTRKFMQNR (218 aa)). R13 provides a ligand contact to GTP. [4Fe-4S] cluster is bound by residues C20 and C24. Y26 provides a ligand contact to S-adenosyl-L-methionine. C27 contributes to the [4Fe-4S] cluster binding site. Residue K61 participates in GTP binding. G65 is a binding site for S-adenosyl-L-methionine. GTP is bound at residue T91. Position 115 (S115) interacts with S-adenosyl-L-methionine. Residue K152 coordinates GTP. C243 and C246 together coordinate [4Fe-4S] cluster. A GTP-binding site is contributed by 248 to 250 (RIR). C260 is a [4Fe-4S] cluster binding site.

It belongs to the radical SAM superfamily. MoaA family. Requires [4Fe-4S] cluster as cofactor.

The enzyme catalyses GTP + AH2 + S-adenosyl-L-methionine = (8S)-3',8-cyclo-7,8-dihydroguanosine 5'-triphosphate + 5'-deoxyadenosine + L-methionine + A + H(+). It functions in the pathway cofactor biosynthesis; molybdopterin biosynthesis. Its function is as follows. Catalyzes the cyclization of GTP to (8S)-3',8-cyclo-7,8-dihydroguanosine 5'-triphosphate. The sequence is that of Probable GTP 3',8-cyclase from Methanococcus maripaludis (strain C7 / ATCC BAA-1331).